A 334-amino-acid chain; its full sequence is Coiled-coil domain-containing protein 89 (334 aa).

Residues 75 to 318 (EAAQRFQSER…EAYKKHSGDL (244 aa)) adopt a coiled-coil conformation.

The protein belongs to the CCDC89 family. In terms of assembly, interacts (via C-terminus) with hey1/bc8 (via Orange domain). In adults, expressed at varying levels in different organs including the liver and brain, with highest expression in the testis.

The protein localises to the cytoplasm. Its subcellular location is the nucleus. This chain is Coiled-coil domain-containing protein 89, found in Xenopus laevis (African clawed frog).